Consider the following 65-residue polypeptide: Large ribosomal subunit protein bL35 (65 aa).

Basic residues predominate over residues 1-16 (MVPKQKTHSGAKKRFK). The interval 1–39 (MVPKQKTHSGAKKRFKLTGSGSVSRARAGMRHNFEHRSS) is disordered.

This sequence belongs to the bacterial ribosomal protein bL35 family.

In Tropheryma whipplei (strain TW08/27) (Whipple's bacillus), this protein is Large ribosomal subunit protein bL35.